A 297-amino-acid polypeptide reads, in one-letter code: N-acetylmannosamine kinase (297 aa).

Residues Ala-5–Lys-12 and Gly-132–Leu-139 contribute to the ATP site. Residues His-156, Cys-166, Cys-168, and Cys-173 each coordinate Zn(2+).

The protein belongs to the ROK (NagC/XylR) family. NanK subfamily. As to quaternary structure, homodimer.

It carries out the reaction an N-acyl-D-mannosamine + ATP = an N-acyl-D-mannosamine 6-phosphate + ADP + H(+). Its pathway is amino-sugar metabolism; N-acetylneuraminate degradation; D-fructose 6-phosphate from N-acetylneuraminate: step 2/5. Catalyzes the phosphorylation of N-acetylmannosamine (ManNAc) to ManNAc-6-P. This Pasteurella multocida (strain Pm70) protein is N-acetylmannosamine kinase.